The following is a 126-amino-acid chain: C-type natriuretic peptide (126 aa).

An N-terminal signal peptide occupies residues 1–23 (MHLSQLLACALLLSLLSLRPSEA). The segment at 20–71 (PSEAKPGAPPKVPRTPPGEEVAEPQAAGGGQKKGDKTPGGGGANLKDDRSRL) is disordered. Residues 24–73 (KPGAPPKVPRTPPGEEVAEPQAAGGGQKKGDKTPGGGGANLKDDRSRLLR) constitute a propeptide that is removed on maturation. Residues 26–35 (GAPPKVPRTP) are compositionally biased toward pro residues. The span at 46–62 (AGGGQKKGDKTPGGGGA) shows a compositional bias: gly residues. An intrachain disulfide couples C110 to C126.

Belongs to the natriuretic peptide family. Degraded by IDE (in vitro).

The protein localises to the secreted. In terms of biological role, hormone which plays a role in endochondral ossification through regulation of cartilaginous growth plate chondrocytes proliferation and differentiation. May also be vasoactive and natriuretic. Acts by specifically binding and stimulating NPR2 to produce cGMP. Binds the clearance receptor NPR3. This Ovis aries (Sheep) protein is C-type natriuretic peptide (NPPC).